A 702-amino-acid polypeptide reads, in one-letter code: ATP-dependent RNA helicase DDX4 (702 aa).

The segment at 22–228 is disordered; it reads FEKDKYSSGA…YIPPPPPEDE (207 aa). The span at 29–46 shows a compositional bias: polar residues; it reads SGANGDTFNRTSASSDIG. Gly residues-rich tracts occupy residues 58–68 and 125–137; these read GGFGRGKGFGN and RGSFRGCRGGFGL. Polar residues-rich tracts occupy residues 141-150 and 195-215; these read NSESDQDQGT and SGKNSWKSETEGGESSDSQGP. Phosphoserine occurs at positions 195 and 199. An interaction with RANBP9 region spans residues 201–220; that stretch reads KSETEGGESSDSQGPKVTYI. The Q motif motif lies at 261-289; sequence LTFEEANLCQTLNNNIAKAGYTKLTPVQK. The Helicase ATP-binding domain occupies 292 to 475; that stretch reads IPIVLAGRDL…GDFLKSSYLF (184 aa). Residue 305-312 coordinates ATP; sequence AQTGSGKT. Positions 419-422 match the DEAD box motif; that stretch reads DEAD. Residues 503–648 form the Helicase C-terminal domain; sequence KLVEILRNIG…DVPAWLEEIA (146 aa). Residues 681 to 693 are compositionally biased toward polar residues; sequence TLNTAGISSSQAP. Residues 681–702 are disordered; it reads TLNTAGISSSQAPNPVDDESWD. Residue Ser-700 is modified to Phosphoserine.

The protein belongs to the DEAD box helicase family. DDX4/VASA subfamily. Found in a mRNP complex, at least composed of TDRD1, TDRD6, TDRD7 and DDX4. Interacts with RANBP9. Interacts with RANBP10. Interacts with PIWIL2 and MAEL. Interacts with BMAL1 and CLOCK. Interacts with Tex19.1 and, probably, Tex19.2. Interacts with RBM46. As to expression, testis-specific.

It is found in the cytoplasm. The protein resides in the perinuclear region. The catalysed reaction is ATP + H2O = ADP + phosphate + H(+). Functionally, ATP-dependent RNA helicase required during spermatogenesis to repress transposable elements and preventing their mobilization, which is essential for the germline integrity. Acts via the piRNA metabolic process, which mediates the repression of transposable elements during meiosis by forming complexes composed of piRNAs and Piwi proteins and governs the methylation and subsequent repression of transposons. Involved in the secondary piRNAs metabolic process, the production of piRNAs in fetal male germ cells through a ping-pong amplification cycle. Required for PIWIL2 slicing-triggered piRNA biogenesis: helicase activity enables utilization of one of the slice cleavage fragments generated by PIWIL2 and processing these pre-piRNAs into piRNAs. The protein is ATP-dependent RNA helicase DDX4 of Mus musculus (Mouse).